We begin with the raw amino-acid sequence, 435 residues long: Adenylosuccinate synthetase (435 aa).

GTP contacts are provided by residues 19–25 and 49–51; these read GDEGKGK and GHT. D20 serves as the catalytic Proton acceptor. D20 and G49 together coordinate Mg(2+). Residues 20 to 23, 47 to 50, T139, R153, N233, T248, and R312 each bind IMP; these read DEGK and NAGH. The active-site Proton donor is the H50. 308–314 is a substrate binding site; it reads VTTGRKR. Residues R314, 340 to 342, and 422 to 424 each bind GTP; these read KLD and GVG.

It belongs to the adenylosuccinate synthetase family. Homodimer. Mg(2+) is required as a cofactor.

Its subcellular location is the cytoplasm. It catalyses the reaction IMP + L-aspartate + GTP = N(6)-(1,2-dicarboxyethyl)-AMP + GDP + phosphate + 2 H(+). It functions in the pathway purine metabolism; AMP biosynthesis via de novo pathway; AMP from IMP: step 1/2. Functionally, plays an important role in the de novo pathway and in the salvage pathway of purine nucleotide biosynthesis. Catalyzes the first committed step in the biosynthesis of AMP from IMP. The polypeptide is Adenylosuccinate synthetase (Brugia malayi (Filarial nematode worm)).